A 679-amino-acid chain; its full sequence is Protein CASP (679 aa).

At 1–614 the chain is on the cytoplasmic side; it reads MDTSVYSHAL…VILQNKMTRM (614 aa). 2 coiled-coil regions span residues 14–90 and 178–341; these read AKAD…EKVL and RNWK…NYSD. At Ser364 the chain carries Phosphoserine. A coiled-coil region spans residues 385–444; that stretch reads ANKKLQATLAEYRSKSTAQEEERNELKKSVDQLKQQIATLKEANEKLETDLEKVENVSPH. Phosphoserine is present on residues Ser450 and Ser453. Positions 492-540 form a coiled coil; it reads IVTKQRDRFRSRNMDLEKQLRQGNSEKGKLKLEISKLKGDNTKLYERIR. The residue at position 555 (Ser555) is a Phosphoserine. Residues 615-635 traverse the membrane as a helical; Anchor for type IV membrane protein segment; it reads VFLFYCIGLHGLVFMMSMYVI. At 636-679 the chain is on the lumenal side; the sequence is NISGYMTPEVGIVQSAKSSSNLNGGLGGAEKVAAGVGSVHGINR.

This sequence belongs to the CASP family.

It is found in the golgi apparatus membrane. In terms of biological role, may be involved in intra-Golgi transport. The sequence is that of Protein CASP (COY1) from Saccharomyces cerevisiae (strain ATCC 204508 / S288c) (Baker's yeast).